A 129-amino-acid chain; its full sequence is Small ribosomal subunit protein uS9 (129 aa).

Belongs to the universal ribosomal protein uS9 family.

This is Small ribosomal subunit protein uS9 (rps9) from Thermoplasma acidophilum (strain ATCC 25905 / DSM 1728 / JCM 9062 / NBRC 15155 / AMRC-C165).